Here is a 77-residue protein sequence, read N- to C-terminus: uncharacterized protein (77 aa).

A Peptidase A1 domain is found at Met-1–Trp-77.

This is an uncharacterized protein from Saccharomyces cerevisiae (strain ATCC 204508 / S288c) (Baker's yeast).